Here is a 1349-residue protein sequence, read N- to C-terminus: ABC multidrug transporter G (1349 aa).

In terms of domain architecture, ABC transporter 1 spans Arg51–Lys299. Asn144 is a glycosylation site (N-linked (GlcNAc...) asparagine). 4 consecutive transmembrane segments (helical) span residues Leu407–Phe427, Ser436–Met456, Ile492–Leu512, and Trp523–Leu543. Residue Asn549 is glycosylated (N-linked (GlcNAc...) asparagine). A run of 2 helical transmembrane segments spans residues Ala550–Pro570 and Trp580–Val600. N-linked (GlcNAc...) asparagine glycosylation is present at Asn649. A helical transmembrane segment spans residues Phe659–Leu679. The 243-residue stretch at Phe721 to Ala963 folds into the ABC transporter 2 domain. Gly757–Thr764 lines the ATP pocket. Asn994 carries an N-linked (GlcNAc...) asparagine glycan. A run of 6 helical transmembrane segments spans residues Val1056–Gly1076, Phe1085–Phe1105, Ile1121–Ala1143, Met1166–Ala1186, Phe1193–Val1213, and Trp1226–Trp1246. An N-linked (GlcNAc...) asparagine glycan is attached at Asn1287. The helical transmembrane segment at Thr1318–Leu1338 threads the bilayer.

This sequence belongs to the ABC transporter superfamily. ABCG family. PDR (TC 3.A.1.205) subfamily.

It localises to the cell membrane. ABC efflux transporter that seems not to be able to transport azoles, nor rhodamine 6G (R-6G), a known substrate for many ABC transporters. This chain is ABC multidrug transporter G, found in Aspergillus fumigatus (strain ATCC MYA-4609 / CBS 101355 / FGSC A1100 / Af293) (Neosartorya fumigata).